Consider the following 319-residue polypeptide: Ferrochelatase (319 aa).

His-194 and Glu-275 together coordinate Fe cation.

Belongs to the ferrochelatase family.

The protein resides in the cytoplasm. It catalyses the reaction heme b + 2 H(+) = protoporphyrin IX + Fe(2+). It functions in the pathway porphyrin-containing compound metabolism; protoheme biosynthesis; protoheme from protoporphyrin-IX: step 1/1. Its function is as follows. Catalyzes the ferrous insertion into protoporphyrin IX. The chain is Ferrochelatase from Vibrio vulnificus (strain CMCP6).